The primary structure comprises 190 residues: MELVVGRVAKSHGIKGELVVEVRTDEPEDRFAVGSVLRGRKPRESTLKSYTVEAARDHSGRLLLRLEGVSDRGDADALRGTLFVIDSSELEPSDDPDEFYDHELEGLKVVLTDGTEVGSVIEVLHSAAGELLSIRRTGETSGELLIPFVAAIVTSVSIADGVVMIEPPEGLLDPDFGDKSNSDNSNSDND.

The region spanning 95 to 171 is the PRC barrel domain; that stretch reads DPDEFYDHEL…VVMIEPPEGL (77 aa). The segment at 169-190 is disordered; the sequence is EGLLDPDFGDKSNSDNSNSDND.

The protein belongs to the RimM family. In terms of assembly, binds ribosomal protein uS19.

The protein localises to the cytoplasm. In terms of biological role, an accessory protein needed during the final step in the assembly of 30S ribosomal subunit, possibly for assembly of the head region. Essential for efficient processing of 16S rRNA. May be needed both before and after RbfA during the maturation of 16S rRNA. It has affinity for free ribosomal 30S subunits but not for 70S ribosomes. In Rhodococcus erythropolis (strain PR4 / NBRC 100887), this protein is Ribosome maturation factor RimM.